A 164-amino-acid polypeptide reads, in one-letter code: ATP synthase subunit b 1 (164 aa).

Residues 8-28 traverse the membrane as a helical segment; it reads PETWVAIAFVILMGLFAYLGV.

This sequence belongs to the ATPase B chain family. F-type ATPases have 2 components, F(1) - the catalytic core - and F(0) - the membrane proton channel. F(1) has five subunits: alpha(3), beta(3), gamma(1), delta(1), epsilon(1). F(0) has three main subunits: a(1), b(2) and c(10-14). The alpha and beta chains form an alternating ring which encloses part of the gamma chain. F(1) is attached to F(0) by a central stalk formed by the gamma and epsilon chains, while a peripheral stalk is formed by the delta and b chains.

The protein resides in the cell inner membrane. In terms of biological role, f(1)F(0) ATP synthase produces ATP from ADP in the presence of a proton or sodium gradient. F-type ATPases consist of two structural domains, F(1) containing the extramembraneous catalytic core and F(0) containing the membrane proton channel, linked together by a central stalk and a peripheral stalk. During catalysis, ATP synthesis in the catalytic domain of F(1) is coupled via a rotary mechanism of the central stalk subunits to proton translocation. Component of the F(0) channel, it forms part of the peripheral stalk, linking F(1) to F(0). In Bradyrhizobium sp. (strain ORS 278), this protein is ATP synthase subunit b 1.